Here is a 100-residue protein sequence, read N- to C-terminus: UPF0473 protein lwe1514 (100 aa).

The protein belongs to the UPF0473 family.

In Listeria welshimeri serovar 6b (strain ATCC 35897 / DSM 20650 / CCUG 15529 / CIP 8149 / NCTC 11857 / SLCC 5334 / V8), this protein is UPF0473 protein lwe1514.